The chain runs to 760 residues: MATAPLAFRLPFPFSFPSASRPPPSRILAPPTPRRLPLRLAAAAARRFRPPTADDEPPEAAEDSSHGLTRYDQLARSVERARIRQPEITPDNPLFSSPSTAGGGGGGSYDPDDEFFDEIDRAIAEKREEFTRRGLIKPSPASPPPSQSQPEDEDLTDELSPEEVIDLDEIRKLQGLSVVSVADEEDEEVEGGEDEDDGLPLDEDGEGFDVAEELGLEGARMRQPAFRMTLAELLDESKLVPVAVTGDQDVALAGVQRDASLVAAGDLFVCVGEDGLAGLTEADKRGAVAVVADQDLNIEGTLACRALVIVDDILTALRVLPACLYSRPSMNMAIIGVTGTDGVTTTTHLVKAMYEAMGVRTGLVGVLGTYAFSSNKLDARPDASSDPIAAQKLMATMLHNGTEAVVLEKGTDGMPPSGVDSEIDYDIAVLTNVRHTDEENGMTYEEYMSRMASLFSRMVDPERHRKVVNIDDPSAPFFAAQGGHDVPVVTYSFENKKADVHTLKYQLSLFETEVLVQTPHGILEISSGLLGRDNIYSILATVAVGIAVGAPLEDIVRGIEEVDAIPGRCELIDEEQAFGVIVDHARTPEALSRLLDGVRELGPRRIVTVVGCCGEKERGKRPVMTKIAADKSDVVMLTSDNPANEDPLDILDDMLAGVGWTMEEYLKYGANDYYPPLPNGHRLFLHDIRRVAVRAAVAMGEQGDVVVITGKGNDTYQIEGDKNEFFDDREECREALQYVDQLHRAGIDTSEFPWRLPESH.

The N-terminal 59 residues, 1 to 59 (MATAPLAFRLPFPFSFPSASRPPPSRILAPPTPRRLPLRLAAAAARRFRPPTADDEPPE), are a transit peptide targeting the chloroplast. Disordered stretches follow at residues 13–159 (PFSF…TDEL) and 176–205 (LSVV…DEDG). Positions 20-34 (SRPPPSRILAPPTPR) are enriched in pro residues. The span at 53–62 (ADDEPPEAAE) shows a compositional bias: acidic residues. Basic and acidic residues predominate over residues 118 to 132 (EIDRAIAEKREEFTR). Acidic residues-rich tracts occupy residues 150 to 159 (PEDEDLTDEL) and 182 to 205 (ADEE…DEDG).

Belongs to the MurCDEF family. MurE subfamily. Component of the plastid-encoded plastid RNA polymerase (PEP) complex.

The protein resides in the plastid. It localises to the chloroplast. Required for the activity of the plastid-encoded RNA polymerase (PEP) and full expression of genes transcribed by PEP. Required for the proper build-up and formation of the PEP-complex. The chain is UDP-N-acetylmuramoyl-L-alanyl-D-glutamate--2,6-diaminopimelate ligase MurE homolog, chloroplastic from Zea mays (Maize).